The chain runs to 368 residues: Cobalt-precorrin-5B C(1)-methyltransferase (368 aa).

It belongs to the CbiD family.

The catalysed reaction is Co-precorrin-5B + S-adenosyl-L-methionine = Co-precorrin-6A + S-adenosyl-L-homocysteine. It participates in cofactor biosynthesis; adenosylcobalamin biosynthesis; cob(II)yrinate a,c-diamide from sirohydrochlorin (anaerobic route): step 6/10. Its function is as follows. Catalyzes the methylation of C-1 in cobalt-precorrin-5B to form cobalt-precorrin-6A. The polypeptide is Cobalt-precorrin-5B C(1)-methyltransferase (Brucella ovis (strain ATCC 25840 / 63/290 / NCTC 10512)).